Reading from the N-terminus, the 152-residue chain is Small ribosomal subunit protein uS13 (152 aa).

This sequence belongs to the universal ribosomal protein uS13 family. Component of the small ribosomal subunit.

It localises to the cytoplasm. Its function is as follows. Component of the small ribosomal subunit. The ribosome is a large ribonucleoprotein complex responsible for the synthesis of proteins in the cell. Plays an essential role in early embryonic development. The sequence is that of Small ribosomal subunit protein uS13 (rps18) from Danio rerio (Zebrafish).